Here is a 377-residue protein sequence, read N- to C-terminus: Putative glutamate--cysteine ligase 2 (377 aa).

This sequence belongs to the glutamate--cysteine ligase type 2 family. YbdK subfamily.

It catalyses the reaction L-cysteine + L-glutamate + ATP = gamma-L-glutamyl-L-cysteine + ADP + phosphate + H(+). Functionally, ATP-dependent carboxylate-amine ligase which exhibits weak glutamate--cysteine ligase activity. This chain is Putative glutamate--cysteine ligase 2, found in Chromobacterium violaceum (strain ATCC 12472 / DSM 30191 / JCM 1249 / CCUG 213 / NBRC 12614 / NCIMB 9131 / NCTC 9757 / MK).